The primary structure comprises 336 residues: Inositol 2-dehydrogenase (336 aa).

This sequence belongs to the Gfo/Idh/MocA family. As to quaternary structure, homotetramer.

It catalyses the reaction myo-inositol + NAD(+) = scyllo-inosose + NADH + H(+). In terms of biological role, involved in the oxidation of myo-inositol (MI) to 2-keto-myo-inositol (2KMI or 2-inosose). The sequence is that of Inositol 2-dehydrogenase from Acidiphilium cryptum (strain JF-5).